The sequence spans 278 residues: MADS-box transcription factor PHERES 2 (278 aa).

Residues 1–60 enclose the MADS-box domain; sequence MKRKMKLSLIENSVSRKTTFTKRKKGMTKKLTELVTLCGVEACAVVYSPFNSIPEAWPSR.

As to quaternary structure, interacts with AGL61/DIANA and AGL62. As to expression, male gametophyte, embryo and endosperm.

The protein localises to the nucleus. Probable transcription factor involved in the development of gametophytes and seeds. This is MADS-box transcription factor PHERES 2 (PHE2) from Arabidopsis thaliana (Mouse-ear cress).